We begin with the raw amino-acid sequence, 385 residues long: FK506-binding protein 5 (385 aa).

One can recognise a PPIase FKBP-type domain in the interval 26 to 115 (TNFVSVHYDA…RFEVELIGFW (90 aa)). 3 TPR repeats span residues 128-161 (AEKK…IQDL), 177-210 (VSIQ…DMTK), and 211-244 (IKAY…AIGL).

The catalysed reaction is [protein]-peptidylproline (omega=180) = [protein]-peptidylproline (omega=0). Its activity is regulated as follows. Inhibited by both FK506 and rapamycin. In terms of biological role, PPIases accelerate the folding of proteins. It catalyzes the cis-trans isomerization of proline imidic peptide bonds in oligopeptides. The sequence is that of FK506-binding protein 5 (FKBP5) from Rhizopus delemar (strain RA 99-880 / ATCC MYA-4621 / FGSC 9543 / NRRL 43880) (Mucormycosis agent).